The sequence spans 335 residues: Tetraacyldisaccharide 4'-kinase (335 aa).

ATP is bound at residue 58-65; sequence TVGGSGKT.

The protein belongs to the LpxK family.

It carries out the reaction a lipid A disaccharide + ATP = a lipid IVA + ADP + H(+). It functions in the pathway glycolipid biosynthesis; lipid IV(A) biosynthesis; lipid IV(A) from (3R)-3-hydroxytetradecanoyl-[acyl-carrier-protein] and UDP-N-acetyl-alpha-D-glucosamine: step 6/6. Its function is as follows. Transfers the gamma-phosphate of ATP to the 4'-position of a tetraacyldisaccharide 1-phosphate intermediate (termed DS-1-P) to form tetraacyldisaccharide 1,4'-bis-phosphate (lipid IVA). This Shewanella oneidensis (strain ATCC 700550 / JCM 31522 / CIP 106686 / LMG 19005 / NCIMB 14063 / MR-1) protein is Tetraacyldisaccharide 4'-kinase.